A 132-amino-acid chain; its full sequence is Myelin P2 protein (132 aa).

Position 2 is an N-acetylserine (Ser2). (9Z)-octadecenoate contacts are provided by residues Arg107 and 127–129 (RIY). Residues Arg107 and 127 to 129 (RIY) each bind hexadecanoate.

Belongs to the calycin superfamily. Fatty-acid binding protein (FABP) family. As to quaternary structure, monomer.

Its subcellular location is the cytoplasm. Its function is as follows. May play a role in lipid transport protein in Schwann cells. May bind cholesterol. The chain is Myelin P2 protein (Pmp2) from Mus musculus (Mouse).